Consider the following 340-residue polypeptide: UDP-3-O-acylglucosamine N-acyltransferase (340 aa).

Catalysis depends on His-238, which acts as the Proton acceptor.

This sequence belongs to the transferase hexapeptide repeat family. LpxD subfamily. Homotrimer.

The catalysed reaction is a UDP-3-O-[(3R)-3-hydroxyacyl]-alpha-D-glucosamine + a (3R)-hydroxyacyl-[ACP] = a UDP-2-N,3-O-bis[(3R)-3-hydroxyacyl]-alpha-D-glucosamine + holo-[ACP] + H(+). It functions in the pathway bacterial outer membrane biogenesis; LPS lipid A biosynthesis. Functionally, catalyzes the N-acylation of UDP-3-O-acylglucosamine using 3-hydroxyacyl-ACP as the acyl donor. Is involved in the biosynthesis of lipid A, a phosphorylated glycolipid that anchors the lipopolysaccharide to the outer membrane of the cell. The chain is UDP-3-O-acylglucosamine N-acyltransferase from Psychromonas ingrahamii (strain DSM 17664 / CCUG 51855 / 37).